A 700-amino-acid chain; its full sequence is Elongation factor G (700 aa).

Positions 10-285 (DRTRNIGIMA…AVIDYLPSPL (276 aa)) constitute a tr-type G domain. Residues 19–26 (AHIDAGKT), 83–87 (DTPGH), and 137–140 (NKMD) contribute to the GTP site.

The protein belongs to the TRAFAC class translation factor GTPase superfamily. Classic translation factor GTPase family. EF-G/EF-2 subfamily.

The protein localises to the cytoplasm. Its function is as follows. Catalyzes the GTP-dependent ribosomal translocation step during translation elongation. During this step, the ribosome changes from the pre-translocational (PRE) to the post-translocational (POST) state as the newly formed A-site-bound peptidyl-tRNA and P-site-bound deacylated tRNA move to the P and E sites, respectively. Catalyzes the coordinated movement of the two tRNA molecules, the mRNA and conformational changes in the ribosome. This chain is Elongation factor G, found in Lacticaseibacillus paracasei (strain ATCC 334 / BCRC 17002 / CCUG 31169 / CIP 107868 / KCTC 3260 / NRRL B-441) (Lactobacillus paracasei).